The chain runs to 365 residues: tRNA 2-selenouridine synthase (365 aa).

The Rhodanese domain occupies 12–136 (FLHDVPLLDV…LRMFLIDTTQ (125 aa)). The active-site S-selanylcysteine intermediate is Cys95.

It belongs to the SelU family. As to quaternary structure, monomer.

It carries out the reaction 5-methylaminomethyl-2-thiouridine(34) in tRNA + selenophosphate + (2E)-geranyl diphosphate + H2O + H(+) = 5-methylaminomethyl-2-selenouridine(34) in tRNA + (2E)-thiogeraniol + phosphate + diphosphate. The enzyme catalyses 5-methylaminomethyl-2-thiouridine(34) in tRNA + (2E)-geranyl diphosphate = 5-methylaminomethyl-S-(2E)-geranyl-thiouridine(34) in tRNA + diphosphate. The catalysed reaction is 5-methylaminomethyl-S-(2E)-geranyl-thiouridine(34) in tRNA + selenophosphate + H(+) = 5-methylaminomethyl-2-(Se-phospho)selenouridine(34) in tRNA + (2E)-thiogeraniol. It catalyses the reaction 5-methylaminomethyl-2-(Se-phospho)selenouridine(34) in tRNA + H2O = 5-methylaminomethyl-2-selenouridine(34) in tRNA + phosphate. Involved in the post-transcriptional modification of the uridine at the wobble position (U34) of tRNA(Lys), tRNA(Glu) and tRNA(Gln). Catalyzes the conversion of 2-thiouridine (S2U-RNA) to 2-selenouridine (Se2U-RNA). Acts in a two-step process involving geranylation of 2-thiouridine (S2U) to S-geranyl-2-thiouridine (geS2U) and subsequent selenation of the latter derivative to 2-selenouridine (Se2U) in the tRNA chain. In Verminephrobacter eiseniae (strain EF01-2), this protein is tRNA 2-selenouridine synthase.